Reading from the N-terminus, the 201-residue chain is MQTSPLLTQLMEALRCLPGVGPKSAQRMAFTLLQRDRSGGMRLAQTLTRAMSEIGHCADCRTFTEQEVCNICSNPRRKENGQICVVESPADIYAIEQTGQFSGRYFVLMGHLSPLDGIGPDDIGLDRLEQRLAEEKITEVILATNPTVEGEATANYIAELCAQYDVEASRIAHGVPVGGELEMVDGTTLSHSLAGRHKIRF.

A C4-type zinc finger spans residues 57–72 (CADCRTFTEQEVCNIC). In terms of domain architecture, Toprim spans 81-176 (GQICVVESPA…EASRIAHGVP (96 aa)).

The protein belongs to the RecR family.

Its function is as follows. May play a role in DNA repair. It seems to be involved in an RecBC-independent recombinational process of DNA repair. It may act with RecF and RecO. The chain is Recombination protein RecR from Escherichia coli O6:K15:H31 (strain 536 / UPEC).